A 607-amino-acid chain; its full sequence is UvrABC system protein C (607 aa).

The GIY-YIG domain occupies 16-94 (GRPGVYRMFD…IKEWRPPYNI (79 aa)). The 36-residue stretch at 203-238 (NALSEELSASMEKASMALEFERAAELRDQISMLRRV) folds into the UVR domain.

The protein belongs to the UvrC family. In terms of assembly, interacts with UvrB in an incision complex.

It is found in the cytoplasm. The UvrABC repair system catalyzes the recognition and processing of DNA lesions. UvrC both incises the 5' and 3' sides of the lesion. The N-terminal half is responsible for the 3' incision and the C-terminal half is responsible for the 5' incision. In Ectopseudomonas mendocina (strain ymp) (Pseudomonas mendocina), this protein is UvrABC system protein C.